The primary structure comprises 663 residues: Protein MNE1 (663 aa).

The chain is Protein MNE1 (MNE1) from Saccharomyces cerevisiae (strain ATCC 204508 / S288c) (Baker's yeast).